The sequence spans 167 residues: 2-C-methyl-D-erythritol 2,4-cyclodiphosphate synthase (167 aa).

A divalent metal cation contacts are provided by Asp-11 and His-13. 4-CDP-2-C-methyl-D-erythritol 2-phosphate contacts are provided by residues 11–13 (DIH) and 37–38 (HS). A divalent metal cation is bound at residue His-45. Residues 59–61 (DIG), 64–68 (FSDTD), 103–109 (AQAPKMA), and Arg-145 contribute to the 4-CDP-2-C-methyl-D-erythritol 2-phosphate site.

It belongs to the IspF family. Homotrimer. It depends on a divalent metal cation as a cofactor.

The enzyme catalyses 4-CDP-2-C-methyl-D-erythritol 2-phosphate = 2-C-methyl-D-erythritol 2,4-cyclic diphosphate + CMP. Its pathway is isoprenoid biosynthesis; isopentenyl diphosphate biosynthesis via DXP pathway; isopentenyl diphosphate from 1-deoxy-D-xylulose 5-phosphate: step 4/6. Involved in the biosynthesis of isopentenyl diphosphate (IPP) and dimethylallyl diphosphate (DMAPP), two major building blocks of isoprenoid compounds. Catalyzes the conversion of 4-diphosphocytidyl-2-C-methyl-D-erythritol 2-phosphate (CDP-ME2P) to 2-C-methyl-D-erythritol 2,4-cyclodiphosphate (ME-CPP) with a corresponding release of cytidine 5-monophosphate (CMP). The sequence is that of 2-C-methyl-D-erythritol 2,4-cyclodiphosphate synthase from Nitrosomonas eutropha (strain DSM 101675 / C91 / Nm57).